A 148-amino-acid polypeptide reads, in one-letter code: Transcription antitermination protein NusB (148 aa).

The protein belongs to the NusB family.

In terms of biological role, involved in transcription antitermination. Required for transcription of ribosomal RNA (rRNA) genes. Binds specifically to the boxA antiterminator sequence of the ribosomal RNA (rrn) operons. This Novosphingobium aromaticivorans (strain ATCC 700278 / DSM 12444 / CCUG 56034 / CIP 105152 / NBRC 16084 / F199) protein is Transcription antitermination protein NusB.